Consider the following 337-residue polypeptide: Glycerol-3-phosphate dehydrogenase [NAD(P)+] (337 aa).

NADPH is bound by residues S12, W13, and K110. Sn-glycerol 3-phosphate is bound by residues K110, G141, and S143. A145 lines the NADPH pocket. Sn-glycerol 3-phosphate contacts are provided by K196, D249, S259, R260, and N261. Catalysis depends on K196, which acts as the Proton acceptor. Residue R260 participates in NADPH binding. Residues V284 and E286 each contribute to the NADPH site.

Belongs to the NAD-dependent glycerol-3-phosphate dehydrogenase family.

It localises to the cytoplasm. The enzyme catalyses sn-glycerol 3-phosphate + NAD(+) = dihydroxyacetone phosphate + NADH + H(+). It catalyses the reaction sn-glycerol 3-phosphate + NADP(+) = dihydroxyacetone phosphate + NADPH + H(+). The protein operates within membrane lipid metabolism; glycerophospholipid metabolism. Catalyzes the reduction of the glycolytic intermediate dihydroxyacetone phosphate (DHAP) to sn-glycerol 3-phosphate (G3P), the key precursor for phospholipid synthesis. The chain is Glycerol-3-phosphate dehydrogenase [NAD(P)+] from Levilactobacillus brevis (strain ATCC 367 / BCRC 12310 / CIP 105137 / JCM 1170 / LMG 11437 / NCIMB 947 / NCTC 947) (Lactobacillus brevis).